The chain runs to 158 residues: Eukaryotic translation initiation factor 5A (158 aa).

Hypusine is present on K51.

This sequence belongs to the eIF-5A family. Lys-51 undergoes hypusination, a unique post-translational modification that consists in the addition of a butylamino group from spermidine to lysine side chain, leading to the formation of the unusual amino acid hypusine. eIF-5As are the only known proteins to undergo this modification, which is essential for their function.

It localises to the cytoplasm. Its function is as follows. Translation factor that promotes translation elongation and termination, particularly upon ribosome stalling at specific amino acid sequence contexts. Binds between the exit (E) and peptidyl (P) site of the ribosome and promotes rescue of stalled ribosome: specifically required for efficient translation of polyproline-containing peptides as well as other motifs that stall the ribosome. Acts as a ribosome quality control (RQC) cofactor by joining the RQC complex to facilitate peptidyl transfer during CAT tailing step. The chain is Eukaryotic translation initiation factor 5A (ANB1) from Candida albicans (strain SC5314 / ATCC MYA-2876) (Yeast).